The chain runs to 378 residues: UDP-4-amino-4-deoxy-L-arabinose--oxoglutarate aminotransferase (378 aa).

K182 bears the N6-(pyridoxal phosphate)lysine mark.

This sequence belongs to the DegT/DnrJ/EryC1 family. ArnB subfamily. In terms of assembly, homodimer. Requires pyridoxal 5'-phosphate as cofactor.

The catalysed reaction is UDP-4-amino-4-deoxy-beta-L-arabinose + 2-oxoglutarate = UDP-beta-L-threo-pentopyranos-4-ulose + L-glutamate. It participates in nucleotide-sugar biosynthesis; UDP-4-deoxy-4-formamido-beta-L-arabinose biosynthesis; UDP-4-deoxy-4-formamido-beta-L-arabinose from UDP-alpha-D-glucuronate: step 2/3. Its pathway is bacterial outer membrane biogenesis; lipopolysaccharide biosynthesis. Catalyzes the conversion of UDP-4-keto-arabinose (UDP-Ara4O) to UDP-4-amino-4-deoxy-L-arabinose (UDP-L-Ara4N). The modified arabinose is attached to lipid A and is required for resistance to polymyxin and cationic antimicrobial peptides. The sequence is that of UDP-4-amino-4-deoxy-L-arabinose--oxoglutarate aminotransferase from Aeromonas salmonicida (strain A449).